Consider the following 183-residue polypeptide: Capsid protein (183 aa).

Residues 136 to 183 (NAPILSTLPETTVVRRRGRSPRRRTPSPRRRRSQSPRRRRSQSPASQC) form a disordered region. A compositionally biased stretch (basic residues) spans 149-176 (VRRRGRSPRRRTPSPRRRRSQSPRRRRS). Phosphoserine; by host occurs at positions 155, 162, and 170. The stretch at 155 to 161 (SPRRRTP) is one 1; half-length repeat. Positions 155–177 (SPRRRTPSPRRRRSQSPRRRRSQ) are 3 X 8 AA repeats of S-P-R-R-R-[PR]-S-Q. Residues 158-175 (RRTPSPRRRRSQSPRRRR) carry the Bipartite nuclear localization signal motif. A run of 2 repeats spans residues 162–169 (SPRRRRSQ) and 170–177 (SPRRRRSQ). The segment at 177–183 (QSPASQC) is RNA binding.

Belongs to the orthohepadnavirus core antigen family. In terms of assembly, homodimerizes, then multimerizes. Interacts with cytosol exposed regions of viral L glycoprotein present in the reticulum-to-Golgi compartment. Interacts with human FLNB. Phosphorylated form interacts with host importin alpha; this interaction depends on the exposure of the NLS, which itself depends upon genome maturation and/or phosphorylation of the capsid protein. Interacts with host NUP153. Phosphorylated by host SRPK1, SRPK2, and maybe protein kinase C or GAPDH. Phosphorylation is critical for pregenomic RNA packaging. Protein kinase C phosphorylation is stimulated by HBx protein and may play a role in transport of the viral genome to the nucleus at the late step during the viral replication cycle.

It is found in the virion. Its subcellular location is the host cytoplasm. Its function is as follows. Self assembles to form an icosahedral capsid. Most capsids appear to be large particles with an icosahedral symmetry of T=4 and consist of 240 copies of capsid protein, though a fraction forms smaller T=3 particles consisting of 180 capsid proteins. Entering capsids are transported along microtubules to the nucleus. Phosphorylation of the capsid is thought to induce exposure of nuclear localization signal in the C-terminal portion of the capsid protein that allows binding to the nuclear pore complex via the importin (karyopherin-) alpha and beta. Capsids are imported in intact form through the nuclear pore into the nuclear basket, where it probably binds NUP153. Only capsids that contain the mature viral genome can release the viral DNA and capsid protein into the nucleoplasm. Immature capsids get stuck in the basket. Capsids encapsulate the pre-genomic RNA and the P protein. Pre-genomic RNA is reverse-transcribed into DNA while the capsid is still in the cytoplasm. The capsid can then either be directed to the nucleus, providing more genomes for transcription, or bud through the endoplasmic reticulum to provide new virions. This chain is Capsid protein, found in Pan troglodytes (Chimpanzee).